The following is a 687-amino-acid chain: Fimbrin-5 (687 aa).

In terms of domain architecture, EF-hand spans 7–74 (VLVSDPWLQS…KSVLDKSYPN (68 aa)). 4 Calponin-homology (CH) domains span residues 122 to 239 (ESEK…KIQM), 267 to 370 (LAPE…QHRN), 392 to 498 (SREE…RYTM), and 513 to 621 (EITD…YWSL). 2 actin-binding regions span residues 122 to 370 (ESEK…QHRN) and 392 to 621 (SREE…YWSL). The tract at residues 628 to 687 (ESTVSEDATDDGDANSVAGEISNLSIDGASESSPTVQDQELLTKADNDEDEVDGENNKDA) is disordered. Positions 649–667 (SNLSIDGASESSPTVQDQE) are enriched in polar residues.

Interacts with F-actin. As to expression, expressed in mature pollen.

The protein resides in the cytoplasm. It is found in the cytoskeleton. Cross-links actin filaments (F-actin) in a calcium independent manner. Induces the formation of actin bundles. Stabilizes and prevents F-actin depolymerization mediated by latrunculin B (LatB). This Arabidopsis thaliana (Mouse-ear cress) protein is Fimbrin-5.